A 211-amino-acid polypeptide reads, in one-letter code: Thiamine-phosphate synthase (211 aa).

Residues 37-41 (QLREK) and N69 contribute to the 4-amino-2-methyl-5-(diphosphooxymethyl)pyrimidine site. The Mg(2+) site is built by D70 and E89. S108 is a 4-amino-2-methyl-5-(diphosphooxymethyl)pyrimidine binding site. Residue 134–136 (TTT) coordinates 2-[(2R,5Z)-2-carboxy-4-methylthiazol-5(2H)-ylidene]ethyl phosphate. K137 contacts 4-amino-2-methyl-5-(diphosphooxymethyl)pyrimidine. Residues G163 and 183–184 (VS) each bind 2-[(2R,5Z)-2-carboxy-4-methylthiazol-5(2H)-ylidene]ethyl phosphate.

This sequence belongs to the thiamine-phosphate synthase family. The cofactor is Mg(2+).

It carries out the reaction 2-[(2R,5Z)-2-carboxy-4-methylthiazol-5(2H)-ylidene]ethyl phosphate + 4-amino-2-methyl-5-(diphosphooxymethyl)pyrimidine + 2 H(+) = thiamine phosphate + CO2 + diphosphate. The catalysed reaction is 2-(2-carboxy-4-methylthiazol-5-yl)ethyl phosphate + 4-amino-2-methyl-5-(diphosphooxymethyl)pyrimidine + 2 H(+) = thiamine phosphate + CO2 + diphosphate. It catalyses the reaction 4-methyl-5-(2-phosphooxyethyl)-thiazole + 4-amino-2-methyl-5-(diphosphooxymethyl)pyrimidine + H(+) = thiamine phosphate + diphosphate. It functions in the pathway cofactor biosynthesis; thiamine diphosphate biosynthesis; thiamine phosphate from 4-amino-2-methyl-5-diphosphomethylpyrimidine and 4-methyl-5-(2-phosphoethyl)-thiazole: step 1/1. In terms of biological role, condenses 4-methyl-5-(beta-hydroxyethyl)thiazole monophosphate (THZ-P) and 2-methyl-4-amino-5-hydroxymethyl pyrimidine pyrophosphate (HMP-PP) to form thiamine monophosphate (TMP). In Enterococcus faecalis (strain ATCC 700802 / V583), this protein is Thiamine-phosphate synthase.